Here is a 416-residue protein sequence, read N- to C-terminus: UDP-N-acetylmuramoylalanine--D-glutamate ligase (416 aa).

Residue 108–114 participates in ATP binding; the sequence is GTVGKTT.

This sequence belongs to the MurCDEF family.

The protein localises to the cytoplasm. It carries out the reaction UDP-N-acetyl-alpha-D-muramoyl-L-alanine + D-glutamate + ATP = UDP-N-acetyl-alpha-D-muramoyl-L-alanyl-D-glutamate + ADP + phosphate + H(+). Its pathway is cell wall biogenesis; peptidoglycan biosynthesis. In terms of biological role, cell wall formation. Catalyzes the addition of glutamate to the nucleotide precursor UDP-N-acetylmuramoyl-L-alanine (UMA). The polypeptide is UDP-N-acetylmuramoylalanine--D-glutamate ligase (Chlamydia muridarum (strain MoPn / Nigg)).